Reading from the N-terminus, the 369-residue chain is ATP-dependent 6-phosphofructokinase (369 aa).

ATP is bound by residues Gly15, 81–82, and 108–111; these read KG and GDGS. Residue Asp109 coordinates Mg(2+). Substrate-binding positions include 132-134, Arg169, 176-178, Glu230, Arg266, and 272-275; these read TID, MGR, and HIQR. The active-site Proton acceptor is the Asp134.

The protein belongs to the phosphofructokinase type A (PFKA) family. Mixed-substrate PFK group III subfamily. In terms of assembly, homodimer or homotetramer. The cofactor is Mg(2+).

It is found in the cytoplasm. It catalyses the reaction beta-D-fructose 6-phosphate + ATP = beta-D-fructose 1,6-bisphosphate + ADP + H(+). It participates in carbohydrate degradation; glycolysis; D-glyceraldehyde 3-phosphate and glycerone phosphate from D-glucose: step 3/4. Functionally, catalyzes the phosphorylation of D-fructose 6-phosphate to fructose 1,6-bisphosphate by ATP, the first committing step of glycolysis. The polypeptide is ATP-dependent 6-phosphofructokinase (Thermosynechococcus vestitus (strain NIES-2133 / IAM M-273 / BP-1)).